The chain runs to 189 residues: MESLEVANGKSSALGVSREASSPPQMGFFIAQVVLRFFTLAFTGAAIAVMVTAKETVEVFSISFTVRYSYLSAFKFLVGADAVVCGFSMLSLIFVSIFNKGKSNHYFFLYFHDLILMVLSMSACAAATAVGYVGRYGQDKAAWMAVCGNVKMFCDKALASILLSLIGFICLFLLTIMAARNLRVSGHLI.

The Cytoplasmic segment spans residues 1 to 27 (MESLEVANGKSSALGVSREASSPPQMG). Residues 28–48 (FFIAQVVLRFFTLAFTGAAIA) form a helical membrane-spanning segment. At 49–77 (VMVTAKETVEVFSISFTVRYSYLSAFKFL) the chain is on the extracellular side. A helical transmembrane segment spans residues 78–98 (VGADAVVCGFSMLSLIFVSIF). The Cytoplasmic portion of the chain corresponds to 99-113 (NKGKSNHYFFLYFHD). A helical transmembrane segment spans residues 114–134 (LILMVLSMSACAAATAVGYVG). Residues 135 to 156 (RYGQDKAAWMAVCGNVKMFCDK) lie on the Extracellular side of the membrane. Residues 157 to 177 (ALASILLSLIGFICLFLLTIM) traverse the membrane as a helical segment. At 178–189 (AARNLRVSGHLI) the chain is on the cytoplasmic side.

Belongs to the Casparian strip membrane proteins (CASP) family. Homodimer and heterodimers.

The protein localises to the cell membrane. This is CASP-like protein 1F2 from Vitis vinifera (Grape).